Reading from the N-terminus, the 120-residue chain is Holo-[acyl-carrier-protein] synthase (120 aa).

The Mg(2+) site is built by aspartate 8 and glutamate 58.

The protein belongs to the P-Pant transferase superfamily. AcpS family. Requires Mg(2+) as cofactor.

Its subcellular location is the cytoplasm. The catalysed reaction is apo-[ACP] + CoA = holo-[ACP] + adenosine 3',5'-bisphosphate + H(+). Its function is as follows. Transfers the 4'-phosphopantetheine moiety from coenzyme A to a Ser of acyl-carrier-protein. This Anoxybacillus flavithermus (strain DSM 21510 / WK1) protein is Holo-[acyl-carrier-protein] synthase.